We begin with the raw amino-acid sequence, 868 residues long: Leucine--tRNA ligase (868 aa).

Residues 42–52 (PYPSGKLHMGH) carry the 'HIGH' region motif. The 'KMSKS' region motif lies at 627–631 (KMAKS). Lys630 is a binding site for ATP.

Belongs to the class-I aminoacyl-tRNA synthetase family.

It is found in the cytoplasm. It catalyses the reaction tRNA(Leu) + L-leucine + ATP = L-leucyl-tRNA(Leu) + AMP + diphosphate. This Pseudomonas fluorescens (strain Pf0-1) protein is Leucine--tRNA ligase.